The following is a 212-amino-acid chain: Methylthioribulose-1-phosphate dehydratase (212 aa).

Zn(2+)-binding residues include His-97 and His-99.

The protein belongs to the aldolase class II family. MtnB subfamily. In terms of assembly, homotetramer. Zn(2+) is required as a cofactor.

The enzyme catalyses 5-(methylsulfanyl)-D-ribulose 1-phosphate = 5-methylsulfanyl-2,3-dioxopentyl phosphate + H2O. Its pathway is amino-acid biosynthesis; L-methionine biosynthesis via salvage pathway; L-methionine from S-methyl-5-thio-alpha-D-ribose 1-phosphate: step 2/6. Its function is as follows. Catalyzes the dehydration of methylthioribulose-1-phosphate (MTRu-1-P) into 2,3-diketo-5-methylthiopentyl-1-phosphate (DK-MTP-1-P). The sequence is that of Methylthioribulose-1-phosphate dehydratase from Bacillus thuringiensis subsp. konkukian (strain 97-27).